A 204-amino-acid chain; its full sequence is dCTP deaminase, dUMP-forming (204 aa).

Residues 117–122, histidine 128, glycine 132, aspartate 135, 143–145, glutamine 163, tyrosine 177, lysine 184, and glutamine 188 contribute to the dCTP site; these read RSSLGR and TLE. Glutamate 145 functions as the Proton donor/acceptor in the catalytic mechanism.

In terms of assembly, homotrimer. Two trimers assemble into a hexamer by stacking on top of each other. Mg(2+) serves as cofactor.

The catalysed reaction is dCTP + 2 H2O = dUMP + NH4(+) + diphosphate. Its pathway is pyrimidine metabolism; dUMP biosynthesis; dUMP from dCTP: step 1/1. Its activity is regulated as follows. Inhibited by dTTP. Its function is as follows. Bifunctional enzyme that catalyzes both the deamination of dCTP to dUTP and the hydrolysis of dUTP to dUMP without releasing the toxic dUTP intermediate. It also acts as a dUTP diphosphatase with a lower affinity for dUTP than for dCTP. The polypeptide is dCTP deaminase, dUMP-forming (Methanocaldococcus jannaschii (strain ATCC 43067 / DSM 2661 / JAL-1 / JCM 10045 / NBRC 100440) (Methanococcus jannaschii)).